Reading from the N-terminus, the 370-residue chain is Phospho-2-dehydro-3-deoxyheptonate aldolase, tyrosine-inhibited (370 aa).

This sequence belongs to the class-I DAHP synthase family.

It catalyses the reaction D-erythrose 4-phosphate + phosphoenolpyruvate + H2O = 7-phospho-2-dehydro-3-deoxy-D-arabino-heptonate + phosphate. It functions in the pathway metabolic intermediate biosynthesis; chorismate biosynthesis; chorismate from D-erythrose 4-phosphate and phosphoenolpyruvate: step 1/7. With respect to regulation, inhibited by tyrosine. In terms of biological role, stereospecific condensation of phosphoenolpyruvate (PEP) and D-erythrose-4-phosphate (E4P) giving rise to 3-deoxy-D-arabino-heptulosonate-7-phosphate (DAHP). The polypeptide is Phospho-2-dehydro-3-deoxyheptonate aldolase, tyrosine-inhibited (ARO4) (Candida albicans (strain SC5314 / ATCC MYA-2876) (Yeast)).